A 174-amino-acid polypeptide reads, in one-letter code: Histone deacetylase complex subunit SAP30 homolog (174 aa).

Residues 22–70 form an Atypical zinc finger; the sequence is CCLLDDGERCRKQAGNASYSKRIQKTVTQRRLKLSIDSHARHIYICDFH.

The protein belongs to the SAP30 family. In terms of assembly, component of the class 1 Sin3-histone deacetylase complex (HDAC).

The protein localises to the nucleus. Its function is as follows. Required for the function of the class 1 Sin3-histone deacetylase complex (HDAC). This chain is Histone deacetylase complex subunit SAP30 homolog, found in Anopheles gambiae (African malaria mosquito).